The sequence spans 185 residues: Homeobox expressed in ES cells 1 (185 aa).

Positions 108–167 (GRRPRTAFTQNQIEVLENVFRVNCYPGIDIREDLAQKLNLEEDRIQIWFQNRRAKLKRSH) form a DNA-binding region, homeobox.

The protein belongs to the ANF homeobox family. As to quaternary structure, can form heterodimers with PROP1 in binding to DNA. Interacts with TLE1.

It localises to the nucleus. Its function is as follows. Required for the normal development of the forebrain, eyes and other anterior structures such as the olfactory placodes and pituitary gland. Possible transcriptional repressor. Binds to the palindromic PIII sequence, 5'-AGCTTGAGTCTAATTGAATTAACTGTAC-3'. HESX1 and PROP1 bind as heterodimers on this palindromic site, and, in vitro, HESX1 can antagonize PROP1 activation. The protein is Homeobox expressed in ES cells 1 (HESX1) of Pan troglodytes (Chimpanzee).